A 633-amino-acid polypeptide reads, in one-letter code: Phosphomethylpyrimidine synthase (633 aa).

Residues Asn-245, Met-274, Tyr-303, His-339, 359 to 361 (SRG), 400 to 403 (DGLR), and Glu-439 contribute to the substrate site. Residue His-443 coordinates Zn(2+). Residue Tyr-466 coordinates substrate. Position 507 (His-507) interacts with Zn(2+). 3 residues coordinate [4Fe-4S] cluster: Cys-587, Cys-590, and Cys-595.

This sequence belongs to the ThiC family. Homodimer. [4Fe-4S] cluster serves as cofactor.

It carries out the reaction 5-amino-1-(5-phospho-beta-D-ribosyl)imidazole + S-adenosyl-L-methionine = 4-amino-2-methyl-5-(phosphooxymethyl)pyrimidine + CO + 5'-deoxyadenosine + formate + L-methionine + 3 H(+). It participates in cofactor biosynthesis; thiamine diphosphate biosynthesis. In terms of biological role, catalyzes the synthesis of the hydroxymethylpyrimidine phosphate (HMP-P) moiety of thiamine from aminoimidazole ribotide (AIR) in a radical S-adenosyl-L-methionine (SAM)-dependent reaction. The protein is Phosphomethylpyrimidine synthase of Neisseria meningitidis serogroup C (strain 053442).